Here is a 168-residue protein sequence, read N- to C-terminus: Ubiquitin-fold modifier-conjugating enzyme 1 (168 aa).

The active-site Glycyl thioester intermediate is the cysteine 116.

This sequence belongs to the ubiquitin-conjugating enzyme family. UFC1 subfamily.

E2-like enzyme which forms an intermediate with UFM1 via a thioester linkage. The protein is Ubiquitin-fold modifier-conjugating enzyme 1 of Trichoplax adhaerens (Trichoplax reptans).